The primary structure comprises 597 residues: Elongation factor 4 (597 aa).

A tr-type G domain is found at lysine 2–lysine 184. GTP is bound by residues aspartate 14–threonine 19 and asparagine 131–aspartate 134.

Belongs to the TRAFAC class translation factor GTPase superfamily. Classic translation factor GTPase family. LepA subfamily.

The protein resides in the cell inner membrane. The catalysed reaction is GTP + H2O = GDP + phosphate + H(+). In terms of biological role, required for accurate and efficient protein synthesis under certain stress conditions. May act as a fidelity factor of the translation reaction, by catalyzing a one-codon backward translocation of tRNAs on improperly translocated ribosomes. Back-translocation proceeds from a post-translocation (POST) complex to a pre-translocation (PRE) complex, thus giving elongation factor G a second chance to translocate the tRNAs correctly. Binds to ribosomes in a GTP-dependent manner. In Laribacter hongkongensis (strain HLHK9), this protein is Elongation factor 4.